A 101-amino-acid chain; its full sequence is Apolipoprotein C-III (101 aa).

A signal peptide spans 1 to 20 (MQPRMLLIVALVALLASARA). M64 carries the methionine sulfoxide modification. A lipid-binding region spans residues 69 to 101 (KSLKGYWSKFTDKFTGLWESGPEDQLTTPTLEP). T96 carries O-linked (GalNAc...) threonine glycosylation.

It belongs to the apolipoprotein C3 family. In terms of processing, the most abundant glycoforms are characterized by an O-linked disaccharide galactose linked to N-acetylgalactosamine (Gal-GalNAc), further modified with up to 3 sialic acid residues. Less abundant glycoforms are characterized by more complex and fucosylated glycan moieties. O-glycosylated on Thr-96 with a core 1 or possibly core 8 glycan. In terms of tissue distribution, synthesized predominantly in liver and to a lesser degree in intestine.

It is found in the secreted. In terms of biological role, component of triglyceride-rich very low density lipoproteins (VLDL) and high density lipoproteins (HDL) in plasma. Plays a multifaceted role in triglyceride homeostasis. Intracellularly, promotes hepatic very low density lipoprotein 1 (VLDL1) assembly and secretion; extracellularly, attenuates hydrolysis and clearance of triglyceride-rich lipoproteins (TRLs). Impairs the lipolysis of TRLs by inhibiting lipoprotein lipase and the hepatic uptake of TRLs by remnant receptors. Formed of several curved helices connected via semiflexible hinges, so that it can wrap tightly around the curved micelle surface and easily adapt to the different diameters of its natural binding partners. In Rattus norvegicus (Rat), this protein is Apolipoprotein C-III (Apoc3).